The sequence spans 342 residues: MDQFKPFIAKLATGSSLTRAEAEAAFDQIFAGEVTPAQLGGFLMAMRVRGETVDEIIGAVTAMRARMVRVDAPTDAIDIVGTGGDGHGTFNVSTLASLIVAACGVPVAKHGNRAASSRSGASDVLSALGVRTGLDSAGVEACIRGAGIGFMMAQTHHTAMRHVASARVELGTRTIFNLLGPLCNPAGVTRQLLGVFSQAWLEPLAQVLQALGGKHVWVVHGSDGLDELTTTGPSFVTALEDGAIRSFTITPEMAGLPQATLADLKGGDPETNAAALREALGGKKSAYRDIALLNAAAALVIAAKAKDLKEGVLIGAKAVDSGAASAVLAKLVALSNQDNRAA.

Residues Gly81, 84 to 85 (GD), Thr89, 91 to 94 (NVST), 109 to 117 (KHGNRAASS), and Ala121 each bind 5-phospho-alpha-D-ribose 1-diphosphate. Residue Gly81 coordinates anthranilate. Mg(2+) is bound at residue Ser93. An anthranilate-binding site is contributed by Asn112. Arg167 contributes to the anthranilate binding site. Mg(2+) is bound by residues Asp226 and Glu227.

Belongs to the anthranilate phosphoribosyltransferase family. Homodimer. It depends on Mg(2+) as a cofactor.

The enzyme catalyses N-(5-phospho-beta-D-ribosyl)anthranilate + diphosphate = 5-phospho-alpha-D-ribose 1-diphosphate + anthranilate. Its pathway is amino-acid biosynthesis; L-tryptophan biosynthesis; L-tryptophan from chorismate: step 2/5. In terms of biological role, catalyzes the transfer of the phosphoribosyl group of 5-phosphorylribose-1-pyrophosphate (PRPP) to anthranilate to yield N-(5'-phosphoribosyl)-anthranilate (PRA). The polypeptide is Anthranilate phosphoribosyltransferase (Beijerinckia indica subsp. indica (strain ATCC 9039 / DSM 1715 / NCIMB 8712)).